Reading from the N-terminus, the 323-residue chain is Methenyltetrahydromethanopterin cyclohydrolase (323 aa).

Belongs to the MCH family.

It localises to the cytoplasm. It catalyses the reaction 5,10-methenyl-5,6,7,8-tetrahydromethanopterin + H2O = N(5)-formyl-5,6,7,8-tetrahydromethanopterin + H(+). It participates in one-carbon metabolism; methanogenesis from CO(2); 5,10-methenyl-5,6,7,8-tetrahydromethanopterin from CO(2): step 3/3. Its function is as follows. Catalyzes the reversible interconversion of 5-formyl-H(4)MPT to methenyl-H(4)MPT(+). This chain is Methenyltetrahydromethanopterin cyclohydrolase, found in Methanococcus maripaludis (strain DSM 14266 / JCM 13030 / NBRC 101832 / S2 / LL).